Here is an 843-residue protein sequence, read N- to C-terminus: MSQGWRGGWSGGRGGNPYAGGWRGRPWRGRGQGGSWSRNSGRDPVCFSTAPPKPQLTQTTLDKYIPYKGWKLYFSEAYSDSSPFLEKVRAFEKFFTKQIELYDKDEIERKGSILVDYKDLLQDEDLSASIPMSSELKEMPEKILECMGLAIHQVLTKDLERHAAELQEQEGLRTEEAPIVNVPFIHARVFNYDPLTPLKNLRASLYGKYVALRGTVVRVSNIKPLCVKMAFSCNMCGDIQSFPFPDGKYAVPTKCPVPECRGRSFTANRSSPLTVTVDWQTIKVQELMSDDQREAGRIPRTVECELIQDLVDSCVPGDMVTVTGIVKVSNTRDGGFKNKNNKCMFLLYIEANSVSNSKGHKIKSTDDSESHGASMDFSLKDLYAIQEIQAQENLFQLIVNSLCPTIYGHELVKAGLSLALFGGCQKYADDKNRIPIRGDPHILVVGDPGLGKSQMLQAVCNVAPRGVYVCGNTTTTSGLTVTLSRDSATGDFGLEAGALILGDQGICGIDEFDKMGNQHQALLEAMEQQSISLAKAGIVCSLPARTSIIAAANPVGGHYNKGKTVSENLKMGSALLSRFDLVFILLDTPNEDHDHLLSEHVMAMRAGAKEMQSADLTCPTTQNSNTSVLEEPSERPLGERLKLRPGEHFDPIPHQLLRKYVGYARQYVHPTLSPDAAQVLQDFYLELRKQNQGIDSTPITTRQLESLIRLTEARARLELREKATKDDAEEVVQIMKYSLLGTFSDEFGKLDFHRSQHGSGMSNRSKAKKFISALNRIAEQTYNNLFEFQQLRQIAKELQIQLLGKFNHSDKMATEIPNLRAAPGNQLRPKGSVSVLITTWDCA.

Residues 1–23 (MSQGWRGGWSGGRGGNPYAGGWR) are compositionally biased toward gly residues. Positions 1–52 (MSQGWRGGWSGGRGGNPYAGGWRGRPWRGRGQGGSWSRNSGRDPVCFSTAPP) are disordered. The 208-residue stretch at 394–601 (LFQLIVNSLC…DHDHLLSEHV (208 aa)) folds into the MCM domain. 446–453 (GDPGLGKS) serves as a coordination point for ATP.

The protein belongs to the MCM family. Component of the MCM8-MCM9 complex, which forms a hexamer composed of mcm8 and mcm9.

It localises to the nucleus. It carries out the reaction ATP + H2O = ADP + phosphate + H(+). Its function is as follows. Component of the MCM8-MCM9 complex, a complex involved in homologous recombination repair following DNA interstrand cross-links and plays a key role during gametogenesis. The MCM8-MCM9 complex probably acts as a hexameric helicase required to process aberrant forks into homologous recombination substrates and to orchestrate homologous recombination with resection, fork stabilization and fork restart. In eggs, required for elongation during DNA replication by facilitating the recruitment of rpa2/rpa34 and stimulating the processivity of DNA polymerases at replication foci. Probably not required for DNA replication in other cells. This is DNA helicase MCM8 (mcm8) from Xenopus tropicalis (Western clawed frog).